We begin with the raw amino-acid sequence, 155 residues long: Interleukin-2 (155 aa).

Positions 1–20 (MYKMQLLSCIALTLVLVANS) are cleaved as a signal peptide. O-linked (GalNAc...) threonine glycosylation occurs at Thr24. Cysteines 79 and 127 form a disulfide. N-linked (GlcNAc...) asparagine glycosylation occurs at Asn112.

The protein belongs to the IL-2 family.

It is found in the secreted. Functionally, cytokine produced by activated CD4-positive helper T-cells and to a lesser extend activated CD8-positive T-cells and natural killer (NK) cells that plays pivotal roles in the immune response and tolerance. Binds to a receptor complex composed of either the high-affinity trimeric IL-2R (IL2RA/CD25, IL2RB/CD122 and IL2RG/CD132) or the low-affinity dimeric IL-2R (IL2RB and IL2RG). Interaction with the receptor leads to oligomerization and conformation changes in the IL-2R subunits resulting in downstream signaling starting with phosphorylation of JAK1 and JAK3. In turn, JAK1 and JAK3 phosphorylate the receptor to form a docking site leading to the phosphorylation of several substrates including STAT5. This process leads to activation of several pathways including STAT, phosphoinositide-3-kinase/PI3K and mitogen-activated protein kinase/MAPK pathways. Functions as a T-cell growth factor and can increase NK-cell cytolytic activity as well. Promotes strong proliferation of activated B-cells and subsequently immunoglobulin production. Plays a pivotal role in regulating the adaptive immune system by controlling the survival and proliferation of regulatory T-cells, which are required for the maintenance of immune tolerance. Moreover, participates in the differentiation and homeostasis of effector T-cell subsets, including Th1, Th2, Th17 as well as memory CD8-positive T-cells. This is Interleukin-2 (IL2) from Canis lupus familiaris (Dog).